Here is a 149-residue protein sequence, read N- to C-terminus: SKP1-like protein 14 (149 aa).

The segment at 91–149 (LLAANYLNIKGLLDLSAQTVADRIKDKTPEEIREIFNIENDFTPEEEAAVRKENAWAFE) is interaction with the F-box domain of F-box proteins.

It belongs to the SKP1 family. Part of a SCF (SKP1-cullin-F-box) protein ligase complex. Interacts with CPR1/CPR30, At3g61590, At4g39550 and At5g49610. In terms of tissue distribution, restricted to inflorescences, pollen and leaves.

The protein resides in the nucleus. It participates in protein modification; protein ubiquitination. Functionally, involved in ubiquitination and subsequent proteasomal degradation of target proteins. Together with CUL1, RBX1 and a F-box protein, it forms a SCF E3 ubiquitin ligase complex. The functional specificity of this complex depends on the type of F-box protein. In the SCF complex, it serves as an adapter that links the F-box protein to CUL1. In Arabidopsis thaliana (Mouse-ear cress), this protein is SKP1-like protein 14 (ASK14).